We begin with the raw amino-acid sequence, 718 residues long: Heat shock 70 kDa protein 6, chloroplastic (718 aa).

A chloroplast-targeting transit peptide spans 1–92; the sequence is MASSAAQIHV…IDLGTTNSAV (92 aa). Positions 671–718 are disordered; the sequence is QSLYNQPGAGGPGAGPSPGGEGASSGDSSSSKGGDGDDVIDADFTDSQ. Positions 678-693 are enriched in gly residues; sequence GAGGPGAGPSPGGEGA. The span at 706–718 shows a compositional bias: acidic residues; that stretch reads GDDVIDADFTDSQ.

Belongs to the heat shock protein 70 (TC 1.A.33) family. DnaK subfamily. In terms of assembly, interacts with geminivirus movement protein (MP).

The protein localises to the plastid. It localises to the chloroplast stroma. Functionally, acts redundantly with HSP70-7 in the thermotolerance of germinating seeds. Plays an important role in the protein precursor import into chloroplasts. In terms of biological role, in cooperation with other chaperones, Hsp70s are key components that facilitate folding of de novo synthesized proteins, assist translocation of precursor proteins into organelles, and are responsible for degradation of damaged protein under stress conditions. The chain is Heat shock 70 kDa protein 6, chloroplastic (HSP70-6) from Arabidopsis thaliana (Mouse-ear cress).